Here is a 254-residue protein sequence, read N- to C-terminus: Low affinity immunoglobulin gamma Fc region receptor III-A (254 aa).

The N-terminal stretch at 1–20 (MWQLLLPTALLLLVSAGMRA) is a signal peptide. Over 21 to 206 (EDLPKAVVFL…SSISSFFPPG (186 aa)) the chain is Extracellular. Ig-like C2-type domains lie at 24 to 105 (PKAV…LEVH) and 107 to 189 (GWLL…VNIT). Intrachain disulfides connect C47–C89 and C128–C172. N187 is a glycosylation site (N-linked (GlcNAc...) asparagine). A helical transmembrane segment spans residues 207–229 (YQVSFCLVMVLLFAVDTGLYFSV). Residues 230–254 (KKSVPSSTRDWEDHKFKWSKDPQDK) lie on the Cytoplasmic side of the membrane.

Forms a heterooligomeric complex with ITAM-containing signaling subunits, either a homodimer of CD247, a homodimer of FCER1G or a heterodimer of CD247 and FCER1G, to form a functional receptor complex. Interacts (via transmembrane domain) with signaling subunits; this interaction is a prerequisite for receptor complex expression on the cell surface and intracellular signal transduction. Binds the Fc region of antigen-complexed IgG with a preference for IgG1 and IgG3 isotypes. Interacts with CD2; this interaction is involved in NK cell activation and cytotoxicity. Interacts with S100A4; this interaction inhibits PKC-dependent phosphorylation of FCGR3A. Post-translationally, glycosylated. Glycosylation plays an inhibitory role in the interaction with IgG1 and IgG2. Undergoes rapid ectodomain shedding upon NK cell stimulation. The soluble form is produced by a proteolytic cleavage mediated by ADAM17. Repeated stimulation causes receptor shedding, a mechanism that allows for increased NK cell motility and detachment from opsonized target cells while avoiding activation-induced NK cell apoptosis. Lymphocytes and monocytes.

The protein localises to the cell membrane. Its subcellular location is the secreted. Receptor for the invariable Fc fragment of immunoglobulin gamma (IgG). Optimally activated upon binding of clustered antigen-IgG complexes displayed on cell surfaces, triggers lysis of antibody-coated cells, a process known as antibody-dependent cellular cytotoxicity (ADCC). Does not bind free monomeric IgG, thus avoiding inappropriate effector cell activation in the absence of antigenic trigger. Mediates IgG effector functions on natural killer (NK) cells. Binds antigen-IgG complexes generated upon infection and triggers NK cell-dependent cytokine production and degranulation to limit viral load and propagation. Involved in the generation of memory-like adaptive NK cells capable to produce high amounts of IFNG and to efficiently eliminate virus-infected cells via ADCC. Regulates NK cell survival and proliferation, in particular by preventing NK cell progenitor apoptosis. Fc-binding subunit that associates with CD247 and/or FCER1G adapters to form functional signaling complexes. Following the engagement of antigen-IgG complexes, triggers phosphorylation of immunoreceptor tyrosine-based activation motif (ITAM)-containing adapters with subsequent activation of phosphatidylinositol 3-kinase signaling and sustained elevation of intracellular calcium that ultimately drive NK cell activation. The ITAM-dependent signaling coupled to receptor phosphorylation by PKC mediates robust intracellular calcium flux that leads to production of pro-inflammatory cytokines, whereas in the absence of receptor phosphorylation it mainly activates phosphatidylinositol 3-kinase signaling leading to cell degranulation. Costimulates NK cells and trigger lysis of target cells independently of IgG binding. Mediates the antitumor activities of therapeutic antibodies. Upon ligation on monocytes triggers TNFA-dependent ADCC of IgG-coated tumor cells. Mediates enhanced ADCC in response to afucosylated IgGs. The protein is Low affinity immunoglobulin gamma Fc region receptor III-A of Macaca mulatta (Rhesus macaque).